Consider the following 97-residue polypeptide: Putative pterin-4-alpha-carbinolamine dehydratase (97 aa).

Belongs to the pterin-4-alpha-carbinolamine dehydratase family.

The catalysed reaction is (4aS,6R)-4a-hydroxy-L-erythro-5,6,7,8-tetrahydrobiopterin = (6R)-L-erythro-6,7-dihydrobiopterin + H2O. This chain is Putative pterin-4-alpha-carbinolamine dehydratase, found in Brucella abortus (strain S19).